A 798-amino-acid polypeptide reads, in one-letter code: Sodium/hydrogen exchanger 4 (798 aa).

At 1-13 the chain is on the cytoplasmic side; sequence MALQMFVTYSPWN. The segment at residues 14–28 is an intramembrane region (name=A/M1); sequence CLLLLVALECSEASS. The Cytoplasmic portion of the chain corresponds to 29–69; sequence DLNESANSTAQYASNAWFAAASSEPEEGISVFELDYDYVQI. The segment at residues 70–90 is an intramembrane region (name=B/M2); sequence PYEVTLWILLASLAKIGFHLY. Over 91 to 94 the chain is Cytoplasmic; the sequence is HRLP. Residues 95–115 traverse the membrane as a helical segment; sequence GLMPESCLLILVGALVGGIIF. Over 116–127 the chain is Extracellular; that stretch reads GTDHKSPPVMDS. A helical transmembrane segment spans residues 128–148; that stretch reads SIYFLYLLPPIVLEGGYFMPT. Residues 149 to 154 are Cytoplasmic-facing; the sequence is RPFFEN. Residues 155–175 traverse the membrane as a helical segment; that stretch reads IGSILWWAVLGALINALGIGL. Topologically, residues 176–196 are extracellular; it reads SLYLICQVKAFGLGDVNLLQN. The helical transmembrane segment at 197-217 threads the bilayer; that stretch reads LLFGSLISAVDPVAVLAVFEE. Topologically, residues 218–226 are cytoplasmic; it reads ARVNEQLYM. The chain crosses the membrane as a helical span at residues 227–247; it reads MIFGEALLNDGITVVLYNMLI. Over 248–270 the chain is Extracellular; the sequence is AFTKMHKFEDIETVDILAGCARF. A helical transmembrane segment spans residues 271–291; the sequence is IVVGLGGVLFGIVFGFISAFI. Topologically, residues 292 to 304 are cytoplasmic; it reads TRFTQNISAIEPL. Residues 305–325 traverse the membrane as a helical segment; the sequence is IVFMFSYLSYLAAETLYLSGI. Residues 326 to 356 lie on the Extracellular side of the membrane; the sequence is LAITACAVTMKKYVEENVSQTSYTTIKYFMK. An N-linked (GlcNAc...) asparagine glycan is attached at N342. Residues 357–373 form a helical membrane-spanning segment; the sequence is MLSSVSETLIFIFMGVS. Residues 374–384 are Cytoplasmic-facing; sequence TVGKNHEWNWA. A helical membrane pass occupies residues 385–405; it reads FICFTLAFCQIWRAISVFALF. The Extracellular segment spans residues 406–420; that stretch reads YISNQFRTFPFSIKD. Residues 421–441 constitute an intramembrane region (name=L); it reads QCIIFYSGVRGAGSFSLAFLL. The Extracellular portion of the chain corresponds to 442 to 450; the sequence is PLSLFPRKK. The helical transmembrane segment at 451-471 threads the bilayer; sequence MFVTATLVVIYFTVFIQGITV. The Cytoplasmic segment spans residues 472–798; it reads GPLVRYLDVK…RSHSPLLQKK (327 aa). 2 disordered regions span residues 662-690 and 776-798; these read PYGN…GSPS and RWTA…LQKK. The segment covering 784–798 has biased composition (basic residues); the sequence is GRDHHRSHSPLLQKK.

It belongs to the monovalent cation:proton antiporter 1 (CPA1) transporter (TC 2.A.36) family. Homodimer; each protomer has one site for sodium and one site for proton binding. Interacts with CHP1 and CHP2. In terms of processing, may be phosphorylated.

It is found in the basolateral cell membrane. Its subcellular location is the apical cell membrane. The protein resides in the zymogen granule membrane. It catalyses the reaction Na(+)(in) + H(+)(out) = Na(+)(out) + H(+)(in). The catalysed reaction is Na(+)(out) + NH4(+)(in) = Na(+)(in) + NH4(+)(out). In terms of biological role, electroneutral antiporter that exchanges sodium for protons or ammonium ions at the basolateral membrane of epithelia to regulate cell volume and intracellular pH upon hypertonic conditions. As part of transcellular ammonia transport in renal tubules, mediates basolateral ammonium extrusion in the medullary thick ascending limb, regulating the corticopapillary ammonium gradient and overall renal acid excretion. Mediates sodium:proton exchange in gastric parietal cells secondary to cAMP-dependent acid secretion and hyperosmolarity. Possibly coupled to chloride:bicarbonate antiporter, enables loading of parietal cells with sodium and chloride ions to maintain cell volume and normal gastric acid secretion. Functions as a sodium sensor in neurons of organum vasculosum of the lamina terminalis where it regulates water intake in response to increased sodium concentration in body fluids. The chain is Sodium/hydrogen exchanger 4 (SLC9A4) from Homo sapiens (Human).